We begin with the raw amino-acid sequence, 267 residues long: Methylglyoxal reductase DkgB (267 aa).

Tyr39 serves as the catalytic Proton donor. His97 serves as a coordination point for substrate. An NADP(+)-binding site is contributed by 179-231 (MTLAYGKALKDEVIARIAAKHNATPAQVILAWAMGEGYSVIPSSTKRENLESN).

This sequence belongs to the aldo/keto reductase family. In terms of assembly, monomer.

The protein localises to the cytoplasm. It carries out the reaction hydroxyacetone + NADP(+) = methylglyoxal + NADPH + H(+). Its function is as follows. Aldo-keto reductase that significantly contributes to cellular methylglyoxal detoxification by catalyzing the NADPH-dependent conversion of methylglyoxal to acetol. This chain is Methylglyoxal reductase DkgB, found in Escherichia coli O157:H7.